A 437-amino-acid chain; its full sequence is Glutamyl-tRNA reductase (437 aa).

Substrate is bound by residues 49–52 (TCNR), serine 109, 114–116 (EGQ), and glutamine 120. The active-site Nucleophile is the cysteine 50. 198-203 (GAGRMS) is a binding site for NADP(+).

This sequence belongs to the glutamyl-tRNA reductase family. Homodimer.

It catalyses the reaction (S)-4-amino-5-oxopentanoate + tRNA(Glu) + NADP(+) = L-glutamyl-tRNA(Glu) + NADPH + H(+). Its pathway is porphyrin-containing compound metabolism; protoporphyrin-IX biosynthesis; 5-aminolevulinate from L-glutamyl-tRNA(Glu): step 1/2. It functions in the pathway porphyrin-containing compound metabolism; chlorophyll biosynthesis. Functionally, catalyzes the NADPH-dependent reduction of glutamyl-tRNA(Glu) to glutamate 1-semialdehyde (GSA). In Prochlorococcus marinus (strain SARG / CCMP1375 / SS120), this protein is Glutamyl-tRNA reductase.